The following is a 290-amino-acid chain: HTH-type transcriptional regulator BsdA (290 aa).

The HTH lysR-type domain occupies 1 to 59; sequence MDIRQLRYFITIAQEQKITSAAKKLHMAQPPLSRQLKQLEDELGVVLFDRNKKKQMTLT. Positions 18–37 form a DNA-binding region, H-T-H motif; that stretch reads ITSAAKKLHMAQPPLSRQLK.

It belongs to the LysR transcriptional regulatory family.

Functionally, could be a positive regulator of bsdBCD expression in response to salicylic acid. This is HTH-type transcriptional regulator BsdA (bsdA) from Bacillus subtilis (strain 168).